The primary structure comprises 554 residues: Intraflagellar transport protein 56 (554 aa).

Residues 1–27 are disordered; sequence MMLSRAKPAVGGESPHTDKRKKKGRKI. Positions 18–27 are enriched in basic residues; the sequence is DKRKKKGRKI. TPR repeat units lie at residues 57-90, 92-125, 151-184, and 468-501; these read EDTNLWIGYCAFHLGDYKRALEEYENAAKEENCN, EVWVNLACTYFFLGMYKQAEAAGFKAPKSRLQNR, KEDQLSLASIHYMRSHYQEAIDIYKRILLDNREY, and ANDCYKMGQFYYSAKAFDVLERLDPNPEYWEGKR.

The protein belongs to the IFT56 family. As to quaternary structure, component of the IFT complex B. Interacts with IFT46; the interaction is direct.

It is found in the cell projection. It localises to the cilium. Component of the intraflagellar transport (IFT) complex B required for transport of proteins in the motile cilium. Required for transport of specific ciliary cargo proteins related to motility, while it is neither required for IFT complex B assembly or motion nor for cilium assembly. Required for efficient coupling between the accumulation of GLI2 and GLI3 at the ciliary tips and their dissociation from the negative regulator SUFU. Plays a key role in maintaining the integrity of the IFT complex B and the proper ciliary localization of the IFT complex B components. Not required for IFT complex A ciliary localization or function. Essential for maintaining proper microtubule organization within the ciliary axoneme. The polypeptide is Intraflagellar transport protein 56 (Rattus norvegicus (Rat)).